Reading from the N-terminus, the 266-residue chain is Phosphatidylglycerol--prolipoprotein diacylglyceryl transferase (266 aa).

Helical transmembrane passes span 21 to 41, 60 to 80, 95 to 115, 124 to 144, 176 to 196, 203 to 223, and 236 to 256; these read LAIR…MWLA, LLFA…VLFY, VWTG…AMLW, FFSV…MGRM, SQLY…NIFI, GAVS…IEYF, and WISM…LLML. Arg143 contacts a 1,2-diacyl-sn-glycero-3-phospho-(1'-sn-glycerol).

This sequence belongs to the Lgt family.

It localises to the cell inner membrane. The catalysed reaction is L-cysteinyl-[prolipoprotein] + a 1,2-diacyl-sn-glycero-3-phospho-(1'-sn-glycerol) = an S-1,2-diacyl-sn-glyceryl-L-cysteinyl-[prolipoprotein] + sn-glycerol 1-phosphate + H(+). It functions in the pathway protein modification; lipoprotein biosynthesis (diacylglyceryl transfer). In terms of biological role, catalyzes the transfer of the diacylglyceryl group from phosphatidylglycerol to the sulfhydryl group of the N-terminal cysteine of a prolipoprotein, the first step in the formation of mature lipoproteins. This is Phosphatidylglycerol--prolipoprotein diacylglyceryl transferase from Photobacterium profundum (strain SS9).